The following is a 218-amino-acid chain: Pyridoxine/pyridoxamine 5'-phosphate oxidase (218 aa).

Residues 12–15 (RLAY) and Arg70 each bind substrate. FMN is bound by residues 65 to 70 (RTVLLR), 80 to 81 (YT), Lys87, and Gln109. The substrate site is built by Tyr127, Arg131, and Ser135. Residues 145-146 (QS) and Trp191 each bind FMN. 197 to 199 (RLH) serves as a coordination point for substrate. Arg201 lines the FMN pocket.

It belongs to the pyridoxamine 5'-phosphate oxidase family. In terms of assembly, homodimer. The cofactor is FMN.

It catalyses the reaction pyridoxamine 5'-phosphate + O2 + H2O = pyridoxal 5'-phosphate + H2O2 + NH4(+). The enzyme catalyses pyridoxine 5'-phosphate + O2 = pyridoxal 5'-phosphate + H2O2. It participates in cofactor metabolism; pyridoxal 5'-phosphate salvage; pyridoxal 5'-phosphate from pyridoxamine 5'-phosphate: step 1/1. The protein operates within cofactor metabolism; pyridoxal 5'-phosphate salvage; pyridoxal 5'-phosphate from pyridoxine 5'-phosphate: step 1/1. Catalyzes the oxidation of either pyridoxine 5'-phosphate (PNP) or pyridoxamine 5'-phosphate (PMP) into pyridoxal 5'-phosphate (PLP). This is Pyridoxine/pyridoxamine 5'-phosphate oxidase from Deinococcus geothermalis (strain DSM 11300 / CIP 105573 / AG-3a).